Here is a 465-residue protein sequence, read N- to C-terminus: Cysteine--tRNA ligase (465 aa).

Residue cysteine 28 participates in Zn(2+) binding. The 'HIGH' region motif lies at 30 to 40; the sequence is PTVYNYIHVGN. Residues cysteine 208, histidine 233, and glutamate 237 each contribute to the Zn(2+) site. The short motif at 265-269 is the 'KMSKS' region element; the sequence is KMSKS. Lysine 268 serves as a coordination point for ATP.

The protein belongs to the class-I aminoacyl-tRNA synthetase family. Monomer. Zn(2+) serves as cofactor.

The protein resides in the cytoplasm. The catalysed reaction is tRNA(Cys) + L-cysteine + ATP = L-cysteinyl-tRNA(Cys) + AMP + diphosphate. This chain is Cysteine--tRNA ligase, found in Exiguobacterium sp. (strain ATCC BAA-1283 / AT1b).